The chain runs to 827 residues: Spastin (827 aa).

Polar residues predominate over residues 1–13 (MVRNKYTLTTAGK). The disordered stretch occupies residues 1 to 58 (MVRNKYTLTTAGKSPSKKSRTGSLSKQHDATGDDDGETGTLDGSGSAAGSPVGGGTDA). Residues 1–79 (MVRNKYTLTT…KQNLYIISFP (79 aa)) are Cytoplasmic-facing. The segment covering 38-50 (TGTLDGSGSAAGS) has biased composition (low complexity). The segment at residues 80–100 (VIFVFNVLRSLLYQLFIVFRY) is an intramembrane region (helical). The Cytoplasmic portion of the chain corresponds to 101-827 (VYNFTTKVVY…WLQDFGDVTL (727 aa)). Disordered regions lie at residues 127–190 (QHGH…AHPL) and 207–229 (SIQRSASGSQVGPGDPLLAKQKH). The span at 129-141 (GHHHHHHHRHSSH) shows a compositional bias: basic residues. The segment covering 142–190 (SIHSTAAAHQLQQHQQQQQHQYSLLQQEQHGVTEPQQQQQQQHQAAHPL) has biased composition (low complexity). The MIT domain maps to 231 to 306 (HRRAFEYISK…SMARDRLQFL (76 aa)). Disordered regions lie at residues 358 to 381 (HHPARGTAASSRPTTAATAPATPS), 398 to 433 (VGYKRPGNLGVMNKSQTLPRSMGGTRTTPTGTGGAG), and 476 to 526 (VSIP…PQIS). A compositionally biased stretch (low complexity) spans 364–381 (TAASSRPTTAATAPATPS). Low complexity-rich tracts occupy residues 476–486 (VSIPIPGSSPV) and 510–524 (QQPQQPQQQQQQQPQ). 592-599 (GPPGNGKT) is a binding site for ATP.

It belongs to the AAA ATPase family. Spastin subfamily. In terms of assembly, homohexamer. The homohexamer is stabilized by ATP-binding. The homohexamer may adopt a ring conformation through which microtubules pass prior to being severed. Interacts with microtubules.

It localises to the membrane. Its subcellular location is the cytoplasm. It is found in the cytoskeleton. The protein resides in the microtubule organizing center. The protein localises to the centrosome. The enzyme catalyses n ATP + n H2O + a microtubule = n ADP + n phosphate + (n+1) alpha/beta tubulin heterodimers.. In terms of biological role, ATP-dependent microtubule severing protein. Microtubule severing may promote reorganization of cellular microtubule arrays and the release of microtubules from the microtubule organizing center following nucleation. The chain is Spastin (spas) from Anopheles gambiae (African malaria mosquito).